The sequence spans 432 residues: Trigger factor (432 aa).

The region spanning Glu161–Pro246 is the PPIase FKBP-type domain.

This sequence belongs to the FKBP-type PPIase family. Tig subfamily.

It localises to the cytoplasm. It carries out the reaction [protein]-peptidylproline (omega=180) = [protein]-peptidylproline (omega=0). Functionally, involved in protein export. Acts as a chaperone by maintaining the newly synthesized protein in an open conformation. Functions as a peptidyl-prolyl cis-trans isomerase. This chain is Trigger factor, found in Cronobacter sakazakii (strain ATCC BAA-894) (Enterobacter sakazakii).